A 345-amino-acid chain; its full sequence is GDSL esterase/lipase At1g23500 (345 aa).

The signal sequence occupies residues 1–24; that stretch reads MNFSLLSTMLMALSSVCLFFVGYA. S42 (nucleophile) is an active-site residue. N103 carries an N-linked (GlcNAc...) asparagine glycan. Residues D320 and H323 contribute to the active site.

It belongs to the 'GDSL' lipolytic enzyme family.

It is found in the secreted. The protein is GDSL esterase/lipase At1g23500 of Arabidopsis thaliana (Mouse-ear cress).